A 274-amino-acid chain; its full sequence is Large ribosomal subunit protein uL2cy (274 aa).

2 disordered regions span residues 1–20 (MAIHLYKTSTPSTRNGAVDS) and 224–274 (NPVD…RRSK).

Belongs to the universal ribosomal protein uL2 family. In terms of assembly, part of the 50S ribosomal subunit.

The protein resides in the plastid. It localises to the chloroplast. In Populus alba (White poplar), this protein is Large ribosomal subunit protein uL2cy (rpl2-B).